The following is a 512-amino-acid chain: Protein SHC1 (512 aa).

A compositionally biased stretch (acidic residues) spans 101 to 113 (EQDEFENDVEDDA). Disordered stretches follow at residues 101–122 (EQDE…EKSQ) and 144–165 (DGNS…SVAL). 4 Sel1-like repeats span residues 318-353 (PDAQ…KRLH), 354-389 (IESV…TKNH), 390-429 (PAAM…SMAS), and 433-470 (CGAP…ALGH).

Belongs to the SKT5 family.

The protein resides in the cytoplasm. The protein localises to the cytoplasmic granule membrane. Required for the activation of chitin synthase III (CHS3) activity during the sporulation process. The chain is Protein SHC1 (SHC1) from Saccharomyces cerevisiae (strain YJM789) (Baker's yeast).